We begin with the raw amino-acid sequence, 328 residues long: UPF0324 membrane protein AF_1621 (328 aa).

11 consecutive transmembrane segments (helical) span residues 21–39, 43–60, 73–95, 101–123, 130–152, 162–184, 191–213, 223–240, 245–267, 271–293, and 305–327; these read LQML…IINL, ALEP…AGNL, YVPF…PYLG, IVAA…SSRL, SILL…SPLI, AIMI…AHYA, FAVL…QLFG, GIRI…SIIY, FYVP…YLPG, QALR…YTVN, and LFAS…GSGA.

It belongs to the UPF0324 family.

It localises to the cell membrane. The sequence is that of UPF0324 membrane protein AF_1621 from Archaeoglobus fulgidus (strain ATCC 49558 / DSM 4304 / JCM 9628 / NBRC 100126 / VC-16).